Consider the following 430-residue polypeptide: Adenylosuccinate synthetase (430 aa).

GTP contacts are provided by residues 13–19 and 41–43; these read GDEGKGK and GHT. Asp14 functions as the Proton acceptor in the catalytic mechanism. Asp14 and Gly41 together coordinate Mg(2+). IMP-binding positions include 14 to 17, 39 to 42, Thr130, Arg144, Gln225, Thr240, and Arg304; these read DEGK and NAGH. The Proton donor role is filled by His42. Position 300-306 (300-306) interacts with substrate; it reads ASTGRPR. Residues Arg306, 332–334, and 414–416 each bind GTP; these read KLD and STG.

The protein belongs to the adenylosuccinate synthetase family. Homodimer. Mg(2+) serves as cofactor.

It is found in the cytoplasm. The enzyme catalyses IMP + L-aspartate + GTP = N(6)-(1,2-dicarboxyethyl)-AMP + GDP + phosphate + 2 H(+). It participates in purine metabolism; AMP biosynthesis via de novo pathway; AMP from IMP: step 1/2. Functionally, plays an important role in the de novo pathway of purine nucleotide biosynthesis. Catalyzes the first committed step in the biosynthesis of AMP from IMP. In Xanthomonas oryzae pv. oryzae (strain PXO99A), this protein is Adenylosuccinate synthetase.